Consider the following 206-residue polypeptide: Accelerated cell death 11 (206 aa).

5 residues coordinate an N-acylsphingoid base 1-phosphate: aspartate 60, lysine 64, arginine 99, arginine 103, and histidine 143.

This sequence belongs to the GLTP family. In terms of assembly, interacts with BPA1, PRA1F2 and PRA1F3.

It is found in the cytoplasm. Functionally, exhibits selective intermembrane transfer of ceramide-1-phosphate (C1P) and phytoceramide-1-phosphate. Does not transport ceramide (Cer) or GalCer, suggesting a requirement for phosphate in the headgroup for functionality. Transports in vitro sphingosine, but not glycosphingolipids. Also has some in vitro activity with sphingomyelin, a lipid not detected in plant tissues. The transport function may be not directly involved in regulating cell death. Rather, perturbations in the function of ACD11 or related components could be monitored by R-proteins, which then mediate defense and programmed cell death (PCD), as proposed in the guard hypothesis. C1P transfer is stimulated by phosphatidylserine in C1P source vesicles. Regulates autophagy, inflammasome mediated IL1B and IL18 processing, and pyroptosis, but not apoptosis. This Arabidopsis thaliana (Mouse-ear cress) protein is Accelerated cell death 11.